Here is a 148-residue protein sequence, read N- to C-terminus: Aspartate carbamoyltransferase regulatory chain (148 aa).

Residues C106, C111, C134, and C137 each contribute to the Zn(2+) site.

This sequence belongs to the PyrI family. As to quaternary structure, contains catalytic and regulatory chains. It depends on Zn(2+) as a cofactor.

Its function is as follows. Involved in allosteric regulation of aspartate carbamoyltransferase. This Methanococcus maripaludis (strain C6 / ATCC BAA-1332) protein is Aspartate carbamoyltransferase regulatory chain.